The primary structure comprises 24 residues: Brevinin-1La (24 aa).

C18 and C24 are oxidised to a cystine.

In terms of tissue distribution, expressed by the skin glands.

The protein resides in the secreted. Its function is as follows. Antibacterial activity against Gram-positive bacterium S.aureus and Gram-negative bacterium E.coli. The sequence is that of Brevinin-1La from Rana luteiventris (Columbia spotted frog).